A 484-amino-acid chain; its full sequence is Probable UDP-N-acetylglucosamine pyrophosphorylase (484 aa).

The Substrate binding motif lies at L107–G110. UTP contacts are provided by residues L107–G110, K121, Q200, and G226. N227 serves as a coordination point for substrate. Residue D255 coordinates UTP. The Substrate binding signature appears at E304–Y305. K377 contacts UTP. Substrate is bound at residue K407.

Belongs to the UDPGP type 1 family.

The protein resides in the cytoplasm. The enzyme catalyses N-acetyl-alpha-D-glucosamine 1-phosphate + UTP + H(+) = UDP-N-acetyl-alpha-D-glucosamine + diphosphate. It functions in the pathway nucleotide-sugar biosynthesis; UDP-N-acetyl-alpha-D-glucosamine biosynthesis; UDP-N-acetyl-alpha-D-glucosamine from N-acetyl-alpha-D-glucosamine 1-phosphate: step 1/1. The sequence is that of Probable UDP-N-acetylglucosamine pyrophosphorylase from Caenorhabditis elegans.